The following is a 118-amino-acid chain: UPF0102 protein Sde_3146 (118 aa).

Belongs to the UPF0102 family.

This is UPF0102 protein Sde_3146 from Saccharophagus degradans (strain 2-40 / ATCC 43961 / DSM 17024).